Consider the following 935-residue polypeptide: MTELKAKGPRAPHVAGSPSSPKVGSPLPCSQAAGPFPGSQTSDTLPEASALPISLDGLLFPRICQGQDPTDEKTQDQQSLSDVZGAYSRVEATRGAGGSSSRPPEKDSGLLDSVLDTLWEPSGPGQSQPSPPACEVTSSWCLFGPELPEDPPAAPATQRVLSPLMSRSGGKAGDSSGMAAAHKVLPRGLSPSRQLLLPTSGSPHWSGAPVKPSPQPAAVEVEEEDGSESEDSAGPLLKGKPRALGGAAAGGGVAAVPPGAAAGGLSLVPKEDSRFSAPRVALVEQDAPMAPGRSPLATTVTDFIHVPILPLSHALLAARTRQLLEDESYDGGAGAASAFAPPRSSPSASSTPVPGGDFPDCAYAPEAEPKDDAYPLYGDFQPPALKIKEEEEGAEASARSPRSYLVAGASPAAFPDFPLGPPPSLPPRAPPPRPGEAAVTAAPASASVSSASSSGSTLECILYKAEGAPSQQGQFAPPPCKAPGAGGCLLPRDSLPSTSASAAATAAGAAPGLYPALGLNGLPQLGYQAAVLKEGLPQVYPPYLNYLRPDSEASQSPQYSFESLPQKICLICGDEASGCHYGVLTCGSCKVFFKRAMEGQHNYLCAGRNDCIVDKIRRKNCPACRLRKCCQAGMVLGGRKFKKFNKVRVMRALDAVALPQPVGIPNENQALSQRFTFSPSQDIQLIPPLINLLLSIEPDVIFAGHDNTKPDTSSSLLTSLNQLGERQLLSVVKWSKSLPGFRNLHIDDQITLIQYSWMSLMVFGLGWRSYKHVSGQMLYFAPDLILNEQRMKESSFYSLCLTMWQIPQEFVKLQVSQEEFLCMKVLLLLNTIPLEGLRSQTQFEEMRSSYIRELIKAIGLRQKGVVSSSQRFYQLTKLLDNLHDLVKQLHLYCLNTFIQSRALSVEFPEMMSEVIAAQLPKILAGMVKPLLFHKK.

Positions 1-50 are disordered; sequence MTELKAKGPRAPHVAGSPSSPKVGSPLPCSQAAGPFPGSQTSDTLPEASA. Positions 1 to 164 are AF3; mediates transcriptional activation; that stretch reads MTELKAKGPR…PATQRVLSPL (164 aa). The segment at 1–568 is modulating, Pro-Rich; sequence MTELKAKGPR…YSFESLPQKI (568 aa). Serine 20 carries the phosphoserine modification. Positions 55–59 match the LXXL motif 1 motif; sequence LDGLL. The tract at residues 62 to 159 is disordered; sequence RICQGQDPTD…DPPAAPATQR (98 aa). Residue serine 81 is modified to Phosphoserine. Residues 115–119 carry the LXXL motif 2 motif; that stretch reads LDTLW. Serine 130 and serine 162 each carry phosphoserine. The interval 165-305 is mediates transcriptional transrepression; it reads MSRSGGKAGD…LATTVTDFIH (141 aa). The short motif at 183–187 is the Nuclear localization signal element; that stretch reads KVLPR. Residues 185 to 252 are disordered; that stretch reads LPRGLSPSRQ…ALGGAAAGGG (68 aa). The residue at position 190 (serine 190) is a Phosphoserine. A compositionally biased stretch (polar residues) spans 191–203; that stretch reads PSRQLLLPTSGSP. Serine 213 carries the phosphoserine modification. The span at 220 to 231 shows a compositional bias: acidic residues; the sequence is EVEEEDGSESED. Positions 232–246 are enriched in low complexity; that stretch reads SAGPLLKGKPRALGG. A Phosphoserine; by MAPK1 modification is found at serine 294. The segment at 331-365 is disordered; sequence GGAGAASAFAPPRSSPSASSTPVPGGDFPDCAYAP. Low complexity predominate over residues 335–356; that stretch reads AASAFAPPRSSPSASSTPVPGG. Serine 345 is modified (phosphoserine; by MAPK). Residue lysine 388 forms a Glycyl lysine isopeptide (Lys-Gly) (interchain with G-Cter in SUMO); alternate linkage. A Glycyl lysine isopeptide (Lys-Gly) (interchain with G-Cter in ubiquitin); alternate cross-link involves residue lysine 388. Phosphoserine; by CDK2 is present on serine 400. The segment at 415 to 452 is disordered; sequence PDFPLGPPPSLPPRAPPPRPGEAAVTAAPASASVSSAS. Residues 418-434 are compositionally biased toward pro residues; it reads PLGPPPSLPPRAPPPRP. Over residues 435–452 the composition is skewed to low complexity; it reads GEAAVTAAPASASVSSAS. Positions 456–548 are AF1; mediates transcriptional activation; sequence STLECILYKA…VYPPYLNYLR (93 aa). Lysine 533 participates in a covalent cross-link: Glycyl lysine isopeptide (Lys-Gly) (interchain with G-Cter in SUMO). 2 consecutive NR C4-type zinc fingers follow at residues 569 to 589 and 605 to 629; these read CLIC…CGSC and CAGR…LRKC. Residues 569-641 constitute a DNA-binding region (nuclear receptor); that stretch reads CLICGDEASG…AGMVLGGRKF (73 aa). The residue at position 678 (serine 678) is a Phosphoserine. Positions 681-915 constitute an NR LBD domain; that stretch reads QDIQLIPPLI…EFPEMMSEVI (235 aa). An AF2; mediates transcriptional activation region spans residues 689–935; sequence LINLLLSIEP…MVKPLLFHKK (247 aa).

It belongs to the nuclear hormone receptor family. Interacts with SMARD1 and UNC45A. Interacts with CUEDC2; the interaction promotes ubiquitination, decreases sumoylation, and represses transcriptional activity. Interacts with PIAS3; the interaction promotes sumoylation of PR in a hormone-dependent manner, inhibits DNA-binding, and alters nuclear export. Interacts with SP1; the interaction requires ligand-induced phosphorylation on Ser-344 by ERK1/2-MAPK. Interacts with PRMT2. Interacts with NCOA2 and NCOA1. Interacts with KLF9. Interacts with GTF2B. In terms of processing, phosphorylated on multiple serine sites. Several of these sites are hormone-dependent. Phosphorylation on Ser-294 is highly hormone-dependent and modulates ubiquitination and sumoylation on Lys-388. Phosphorylation on Ser-345 requires induction by hormone. Basal phosphorylation on Ser-81, Ser-162, Ser-190 and Ser-400 is increased in response to progesterone and can be phosphorylated in vitro by the CDK2-A1 complex. Increased levels of phosphorylation on Ser-400 also in the presence of EGF, heregulin, IGF, PMA and FBS. Phosphorylation at this site by CDK2 is ligand-independent, and increases nuclear translocation and transcriptional activity. Phosphorylation at Ser-162 and Ser-294, but not at Ser-190, is impaired during the G(2)/M phase of the cell cycle. Phosphorylation on Ser-345 by ERK1/2 MAPK is required for interaction with SP1. Sumoylation is hormone-dependent and represses transcriptional activity. Sumoylation on all three sites is enhanced by PIAS3. Desumoylated by SENP1. Sumoylation on Lys-388, the main site of sumoylation, is repressed by ubiquitination on the same site, and modulated by phosphorylation at Ser-294. Post-translationally, ubiquitination is hormone-dependent and represses sumoylation on the same site. Promoted by MAPK-mediated phosphorylation on Ser-294. In terms of processing, palmitoylated by ZDHHC7 and ZDHHC21. Palmitoylation is required for plasma membrane targeting and for rapid intracellular signaling via ERK and AKT kinases and cAMP generation.

The protein localises to the nucleus. The protein resides in the cytoplasm. Its function is as follows. The steroid hormones and their receptors are involved in the regulation of eukaryotic gene expression and affect cellular proliferation and differentiation in target tissues. Transcriptional activator of several progesteron-dependent promoters in a variety of cell types. Involved in activation of SRC-dependent MAPK signaling on hormone stimulation. This is Progesterone receptor (PGR) from Pithecia irrorata (Gray monk saki).